Reading from the N-terminus, the 382-residue chain is Protein delta homolog 2 (382 aa).

Residues 1–26 (MPSGCRCLNLVCLLCILGATSQPARA) form the signal peptide. EGF-like domains follow at residues 27–58 (DDCS…LHCE), 62–89 (RMPG…KFCD), 91–129 (DEHI…RGCE), and 131–172 (KAGP…AHCE). Topologically, residues 27–305 (DDCSSHCDLA…RQESGLGESS (279 aa)) are extracellular. Disulfide bonds link C29–C40, C33–C46, C48–C57, C66–C71, C79–C88, C95–C107, C101–C117, C119–C128, C135–C148, C142–C160, C162–C171, C178–C189, C183–C198, C200–C209, C216–C227, C221–C236, and C238–C247. N157 is a glycosylation site (N-linked (GlcNAc...) asparagine). Positions 174–210 (NVDDCLMRPCANGATCIDGINRFSCLCPEGFAGRFCT) constitute an EGF-like 5; calcium-binding domain. The EGF-like 6; calcium-binding domain maps to 212–248 (NLDDCASRPCQRGARCRDRVHDFDCLCPSGYGGKTCE). Residues 306 to 326 (LVALVVFGSLTAALVLATVLL) traverse the membrane as a helical segment. The Cytoplasmic portion of the chain corresponds to 327–382 (TLRAWRRGICPTGPCCYPAPHYAPARQDQECQVSMLPAGFPLSPDLPPEPGKTTAL).

Detected in a number of tissues including lung, brain, adrenal gland, testis, adult liver, placenta, ovary and thymus. Not detected in fetal liver or in adult spleen, muscle and heart.

It localises to the membrane. Its function is as follows. Regulates adipogenesis. The chain is Protein delta homolog 2 (Dlk2) from Mus musculus (Mouse).